The following is a 630-amino-acid chain: Probable potassium transport system protein Kup (630 aa).

12 helical membrane passes run 17–37, 51–71, 105–125, 144–164, 175–195, 218–238, 255–275, 283–303, 344–364, 374–394, 402–422, and 428–448; these read LAIA…LYSL, PSAI…VVGI, ITGL…GDAV, PQLS…LFWI, LFGP…IYHI, VLLA…AEAL, YVLV…LLLL, PFFL…STVA, IYVP…VIGF, YGIA…VVMV, LLVA…FGAN, and QGGW…MTWY.

Belongs to the HAK/KUP transporter (TC 2.A.72) family.

Its subcellular location is the cell inner membrane. The enzyme catalyses K(+)(in) + H(+)(in) = K(+)(out) + H(+)(out). In terms of biological role, transport of potassium into the cell. Likely operates as a K(+):H(+) symporter. In Burkholderia pseudomallei (strain 1710b), this protein is Probable potassium transport system protein Kup.